Reading from the N-terminus, the 451-residue chain is MKKLFGTDGVRGVANVYPMTTEMAMQIGRAAAYLFKNGNRRHRIVIGKDTRLSGYMLENALVAGICSMGVDVLVVGPLPTPGIANITSSMRADAGVVISASHNAFQDNGIKFFSRDGFKLPDEMELKIEELIFSKKIDSLRPIATEVGKAYRIDDAVGRYVVFLKNTFPKELDLTGMKIVLDCANGAAYKVAPAVLEELGAEVIPYGIKPNGTNINAGFGSLHPEVISEAVKEHRADLGIALDGDADRVIFVDEFGNEVDGDHIMAICATDMLKHKKLRKNTLVATVMSNMGLDIAVKKAGGKVIKTAVGDRYVVEEMLKGGYNLGGEQSGHMIFLDHNTTGDGMLSALQVLAIMRRSGKTLSELAEVMIPLPQVLVNVRVTEKKDIMTIPEVAALIRGVEDKLKDEGRILIRYSGTEPLLRIMLEGQDKYQITGWAKEIADLVEKKIGGK.

Ser-101 acts as the Phosphoserine intermediate in catalysis. Mg(2+) is bound by residues Ser-101, Asp-243, Asp-245, and Asp-247. Ser-101 is modified (phosphoserine).

This sequence belongs to the phosphohexose mutase family. Mg(2+) is required as a cofactor. Activated by phosphorylation.

It catalyses the reaction alpha-D-glucosamine 1-phosphate = D-glucosamine 6-phosphate. Functionally, catalyzes the conversion of glucosamine-6-phosphate to glucosamine-1-phosphate. The chain is Phosphoglucosamine mutase from Geobacter metallireducens (strain ATCC 53774 / DSM 7210 / GS-15).